Consider the following 194-residue polypeptide: dTTP/UTP pyrophosphatase (194 aa).

Catalysis depends on aspartate 73, which acts as the Proton acceptor.

Belongs to the Maf family. YhdE subfamily. The cofactor is a divalent metal cation.

The protein resides in the cytoplasm. It carries out the reaction dTTP + H2O = dTMP + diphosphate + H(+). The enzyme catalyses UTP + H2O = UMP + diphosphate + H(+). Nucleoside triphosphate pyrophosphatase that hydrolyzes dTTP and UTP. May have a dual role in cell division arrest and in preventing the incorporation of modified nucleotides into cellular nucleic acids. This chain is dTTP/UTP pyrophosphatase, found in Geotalea uraniireducens (strain Rf4) (Geobacter uraniireducens).